A 372-amino-acid polypeptide reads, in one-letter code: MAQFSPKPEWLKVRAPGGDTYHHLKETFRKLDLHTVCEEARCPNVGECWREGTATVMLLGDVCTRGCRFCAVTTGDPRGAVDVREPEHVARAIARLSLQYVVMTMVNRDDLLDGGAEHVARTVSRLHALRPDLLIETLVGDFQGHMSAVDMVVDAGPDVFAHNVEVVRRITRVIRDVRSSYDQSLAVLRRAKERQRRLAADAAEAGAPAPRRLTKSSIMVGIGETDDEVLEALRDLREAGVDIVTIGQYLRPSSKHAPVQRFVEPETFAAFERAALEMGFLYAASAPLVRSSYKAAEVFVRSLMDRGGAALPASPGAAAVEALLEERLAVARREAARLTAELDPDEPRPPVAPAPASASPARLVPAASLIRR.

Positions 37, 42, 48, 63, 67, 70, and 292 each coordinate [4Fe-4S] cluster. Positions 49 to 281 (WREGTATVML…ERAALEMGFL (233 aa)) constitute a Radical SAM core domain. Residues 338 to 372 (LTAELDPDEPRPPVAPAPASASPARLVPAASLIRR) form a disordered region. Positions 354 to 372 (APASASPARLVPAASLIRR) are enriched in low complexity.

Belongs to the radical SAM superfamily. Lipoyl synthase family. Requires [4Fe-4S] cluster as cofactor.

The protein resides in the cytoplasm. It catalyses the reaction [[Fe-S] cluster scaffold protein carrying a second [4Fe-4S](2+) cluster] + N(6)-octanoyl-L-lysyl-[protein] + 2 oxidized [2Fe-2S]-[ferredoxin] + 2 S-adenosyl-L-methionine + 4 H(+) = [[Fe-S] cluster scaffold protein] + N(6)-[(R)-dihydrolipoyl]-L-lysyl-[protein] + 4 Fe(3+) + 2 hydrogen sulfide + 2 5'-deoxyadenosine + 2 L-methionine + 2 reduced [2Fe-2S]-[ferredoxin]. Its pathway is protein modification; protein lipoylation via endogenous pathway; protein N(6)-(lipoyl)lysine from octanoyl-[acyl-carrier-protein]: step 2/2. Its function is as follows. Catalyzes the radical-mediated insertion of two sulfur atoms into the C-6 and C-8 positions of the octanoyl moiety bound to the lipoyl domains of lipoate-dependent enzymes, thereby converting the octanoylated domains into lipoylated derivatives. The protein is Lipoyl synthase of Sorangium cellulosum (strain So ce56) (Polyangium cellulosum (strain So ce56)).